A 588-amino-acid polypeptide reads, in one-letter code: Adenine deaminase (588 aa).

This sequence belongs to the metallo-dependent hydrolases superfamily. Adenine deaminase family. In terms of assembly, homodimer. Mn(2+) serves as cofactor.

The catalysed reaction is adenine + H2O + H(+) = hypoxanthine + NH4(+). The sequence is that of Adenine deaminase from Escherichia coli (strain SE11).